The primary structure comprises 162 residues: Retinoic acid receptor responder protein 2 (162 aa).

The signal sequence occupies residues 1–20 (MKCLLISLALWLGTVGTRGT). 3 disulfide bridges follow: Cys-79–Cys-89, Cys-100–Cys-119, and Cys-103–Cys-134. Residues 157 to 162 (RALRTK) constitute a propeptide that is removed on maturation.

Secreted in an inactive precursor form, prochemerin, which is proteolytically processed by a variety of extracellular proteases to generate forms with differing levels of bioactivity. For example, the removal of six amino acids results in chemerin-156, which exhibits the highest activity, while removal of seven amino acids results in chemerin-155 which has slightly less activity. Some proteases are able to cleave at more than one site and chemerin forms may be sequentially processed by different enzymes to modulate activity levels. The coordinated expression and activity of chemerin-modifying enzymes is essential for regulating its bioactivation, inactivation and, consequently, biological function. Cathepsin G cleaves seven C-terminal amino acids from prochemerin (chemerin-155), elastase is able to cleave six (chemerin-156), eight (chemerin-154) or eleven (chemerin-151), plasmin cleaves five amino acids (chemerin-157), and tryptase cleaves five (chemerin-157) or eight (chemerin-154). Multiple cleavages might be required to fully activate chemerin, with an initial tryptase cleavage resulting in chemerin with low activity (chemerin-157), and a second cleavage by carboxypeptidase N or B producing highly active chemerin (chemerin-156). As to expression, expressed in the differentiated adipocytes (at protein level). Abundantly expressed in the liver, adipose tissue including visceral, epididymal, and brown adipose tissue.

The protein localises to the secreted. Functionally, adipocyte-secreted protein (adipokine) that regulates adipogenesis, metabolism and inflammation through activation of the chemokine-like receptor 1 (CMKLR1). Also acts as a ligand for CMKLR2. Can also bind to C-C chemokine receptor-like 2 (CCRL2), but with a lower affinity than it does to CMKLR1 or CMKLR2. Positively regulates adipocyte differentiation, modulates the expression of adipocyte genes involved in lipid and glucose metabolism and might play a role in angiogenesis, a process essential for the expansion of white adipose tissue. Also acts as a pro-inflammatory adipokine, causing an increase in secretion of pro-inflammatory and prodiabetic adipokines, which further impair adipose tissue metabolic function and have negative systemic effects including impaired insulin sensitivity, altered glucose and lipid metabolism, and a decrease in vascular function in other tissues. Can have both pro- and anti-inflammatory properties depending on the modality of enzymatic cleavage by different classes of proteases. Acts as a chemotactic factor for leukocyte populations expressing CMKLR1, particularly immature plasmacytoid dendritic cells, but also immature myeloid DCs, macrophages and natural killer cells. Exerts an anti-inflammatory role by preventing TNF/TNFA-induced VCAM1 expression and monocytes adhesion in vascular endothelial cells. The effect is mediated via inhibiting activation of NF-kappa-B and CRK/p38 through stimulation of AKT1/NOS3 signaling and nitric oxide production. Exhibits an antimicrobial function in the skin. This chain is Retinoic acid receptor responder protein 2 (Rarres2), found in Mus musculus (Mouse).